A 268-amino-acid chain; its full sequence is Eukaryotic translation initiation factor 3 subunit J (268 aa).

2 disordered regions span residues 1 to 117 and 219 to 242; these read MTPS…DLKH and NEKMREERAADKGSKKSKAAKTKV. Acidic residues predominate over residues 26 to 44; it reads DEEDEEVLDSWDAAEDSEV. Positions 40–95 form a coiled coil; that stretch reads EDSEVEREKAAKAAEAKAKAEAEAAAKKKSKAQRIEEHKAERRKNAEADSEEDEDE. Composition is skewed to basic and acidic residues over residues 45 to 65 and 72 to 86; these read EREKAAKAAEAKAKAEAEAAA and QRIEEHKAERRKNAE. The segment covering 87–99 has biased composition (acidic residues); that stretch reads ADSEEDEDEDEDE. Basic and acidic residues-rich tracts occupy residues 100-117 and 220-232; these read AEKRARLRRTEKDSDLKH and EKMREERAADKGS.

The protein belongs to the eIF-3 subunit J family. In terms of assembly, component of the eukaryotic translation initiation factor 3 (eIF-3) complex.

Its subcellular location is the cytoplasm. Its function is as follows. Component of the eukaryotic translation initiation factor 3 (eIF-3) complex, which is involved in protein synthesis of a specialized repertoire of mRNAs and, together with other initiation factors, stimulates binding of mRNA and methionyl-tRNAi to the 40S ribosome. The eIF-3 complex specifically targets and initiates translation of a subset of mRNAs involved in cell proliferation. The chain is Eukaryotic translation initiation factor 3 subunit J (hcr1) from Aspergillus clavatus (strain ATCC 1007 / CBS 513.65 / DSM 816 / NCTC 3887 / NRRL 1 / QM 1276 / 107).